Reading from the N-terminus, the 134-residue chain is Putative pre-16S rRNA nuclease (134 aa).

Belongs to the YqgF nuclease family.

It is found in the cytoplasm. Functionally, could be a nuclease involved in processing of the 5'-end of pre-16S rRNA. The polypeptide is Putative pre-16S rRNA nuclease (Helicobacter pylori (strain P12)).